The primary structure comprises 390 residues: Methylthioribose-1-phosphate isomerase (390 aa).

Aspartate 263 functions as the Proton donor in the catalytic mechanism.

This sequence belongs to the eIF-2B alpha/beta/delta subunits family. MtnA subfamily.

The protein localises to the cytoplasm. Its subcellular location is the nucleus. The catalysed reaction is 5-(methylsulfanyl)-alpha-D-ribose 1-phosphate = 5-(methylsulfanyl)-D-ribulose 1-phosphate. It functions in the pathway amino-acid biosynthesis; L-methionine biosynthesis via salvage pathway; L-methionine from S-methyl-5-thio-alpha-D-ribose 1-phosphate: step 1/6. Its function is as follows. Catalyzes the interconversion of methylthioribose-1-phosphate (MTR-1-P) into methylthioribulose-1-phosphate (MTRu-1-P). The polypeptide is Methylthioribose-1-phosphate isomerase (Meyerozyma guilliermondii (strain ATCC 6260 / CBS 566 / DSM 6381 / JCM 1539 / NBRC 10279 / NRRL Y-324) (Yeast)).